The following is a 94-amino-acid chain: Small nuclear ribonucleoprotein E (94 aa).

The region spanning 14-94 (INCIFNFLQQ…DNITLITSAD (81 aa)) is the Sm domain.

The protein belongs to the snRNP Sm proteins family. Component of the Sm core complex, present in spliceosomal snRNP U1, U2, U4/U6 and U5. The core complex contains SMB1, SMD1, SMD2, SMD3, SME1, SMX3 and SMX2 (Sm proteins B, D1, D2, D3, E, F and G, respectively), and is probably a heptameric ring structure. SME1 specifically interacts with SMX2 and SMX3. Component of the U4/U6-U5 tri-snRNP complex composed of the U4, U6 and U5 snRNAs and at least PRP3, PRP4, PRP6, PRP8, PRP18, PRP31, PRP38, SNU13, SNU23, SNU66, SNU114, SPP381, SMB1, SMD1, SMD2, SMD3, SMX2, SMX3, LSM2, LSM3, LSM4, LSM5, LSM6, LSM7, LSM8, BRR2 and DIB1.

Its subcellular location is the cytoplasm. It is found in the nucleus. Its function is as follows. Involved in pre-mRNA splicing. Binds and is required for the stability of snRNA U1, U2, U4 and U5 which contain a highly conserved structural motif called the Sm binding site. Involved in cap modification. This is Small nuclear ribonucleoprotein E (SME1) from Saccharomyces cerevisiae (strain ATCC 204508 / S288c) (Baker's yeast).